We begin with the raw amino-acid sequence, 102 residues long: Chorion protein S15 (102 aa).

Residues M1–A18 form the signal peptide.

The protein belongs to the chorion protein S15/S18 family.

Its subcellular location is the secreted. Its function is as follows. Chorion membrane (egg shell) protein; plays a role in protecting the egg from the environment. This chain is Chorion protein S15 (Cp15), found in Drosophila grimshawi (Hawaiian fruit fly).